A 246-amino-acid polypeptide reads, in one-letter code: MKMKEFLDLLNESRLTVTLTGAGISTPSGIPDFRGPNGIYKKYSQNVFDIDFFYSHPEEFYRFAKEGIFPMLQAKPNLAHVLLAKLEEKGLIEAVITQNIDRLHQRAGSKKVIELHGNVEEYYCVRCEKKYTVEDVIKKLESSDVPLCDDCNSLIRPNIVFFGENLPQDALREAIGLSSRASLMIVLGSSLVVYPAAELPLITVRSGGKLVIVNLGETPFDDIATLKYNMDVVEFARRVMEEGGIS.

A Deacetylase sirtuin-type domain is found at 1 to 246 (MKMKEFLDLL…RRVMEEGGIS (246 aa)). Residues A22, T26, F33, R34, Q98, I100, D101, and H116 each coordinate NAD(+). F33 is a nicotinamide binding site. Positions 100 and 101 each coordinate nicotinamide. Catalysis depends on H116, which acts as the Proton acceptor. 4 residues coordinate Zn(2+): C124, C127, C148, and C151. The NAD(+) site is built by S189, S190, N214, L215, G216, D231, and V232.

The protein belongs to the sirtuin family. Class U subfamily. It depends on Zn(2+) as a cofactor.

Its subcellular location is the cytoplasm. It carries out the reaction N(6)-acetyl-L-lysyl-[protein] + NAD(+) + H2O = 2''-O-acetyl-ADP-D-ribose + nicotinamide + L-lysyl-[protein]. Non-competitively inhibited by nicotinamide in vitro and in vivo, but not by nicotinic acid. Nicotinamide inhibits the deacetylation activity by reacting with a reaction intermediate. Its function is as follows. NAD-dependent protein deacetylase which modulates the activities of several enzymes which are inactive in their acetylated form. Also has depropionylation activity in vitro. Also able to ADP-ribosylate peptide substrates with Arg or Lys in the +2 position. The role of this function in vivo is not clear. This is NAD-dependent protein deacetylase from Thermotoga maritima (strain ATCC 43589 / DSM 3109 / JCM 10099 / NBRC 100826 / MSB8).